The primary structure comprises 222 residues: DnaJ homolog subfamily B member 9 (222 aa).

The N-terminal stretch at 1 to 23 is a signal peptide; that stretch reads MATPQSVFVFAICILMITELILA. The region spanning 26–90 is the J domain; it reads SYYDILGVPK…HRRKEYDTVG (65 aa). Residues 91 to 222 form a divergent targeting domain region; sequence HTAFTNGKGQ…VTTYTDCSGQ (132 aa). A Phosphoserine modification is found at Ser133.

In terms of assembly, interacts with HSPA5/BiP; interaction is direct. Interacts with ERN1/IRE1 (via the luminal region). Interacts with DERL1.

The protein resides in the endoplasmic reticulum lumen. Its function is as follows. Co-chaperone for Hsp70 protein HSPA5/BiP that acts as a key repressor of the ERN1/IRE1-mediated unfolded protein response (UPR). J domain-containing co-chaperones stimulate the ATPase activity of Hsp70 proteins and are required for efficient substrate recognition by Hsp70 proteins. In the unstressed endoplasmic reticulum, interacts with the luminal region of ERN1/IRE1 and selectively recruits HSPA5/BiP: HSPA5/BiP disrupts the dimerization of the active ERN1/IRE1 luminal region, thereby inactivating ERN1/IRE1. Also involved in endoplasmic reticulum-associated degradation (ERAD) of misfolded proteins. Required for survival of B-cell progenitors and normal antibody production. This Cricetulus griseus (Chinese hamster) protein is DnaJ homolog subfamily B member 9.